Here is a 452-residue protein sequence, read N- to C-terminus: MNSGILQVFQGELICPLCMNYFIDPVTIDCGHSFCRPCFYLNWQDIPFLVQCSECTKSTEQINLKTNIHLKKMASLARKVSLWLFLSSEEQMCGTHRETKKIFCEVDRSLLCLLCSSSQEHRYHRHRPIEWAAEEHREKLLQKMQSLWEKACENHRNLNVETTRTRCWKDYVNLRLEAIRAEYQKMPAFHHEEEKHNLEMLKKKGKEIFHRLHLSKAKMAHRMEILRGMYEELNEMCHKPDVELLQAFGDILHRSESVLLHMPQPLNPELSAGPITGLRDRLNQFRVHITLHHEEANSDIFLYEILRSMCIGCDHQDVPYFTATPRSFLAWGVQTFTSGKYYWEVHVGDSWNWAFGVCNMYRKEKNQNEKIDGKEGLFLLGCIKNDIQCSLFTTSPLMLQYIPKPTSRVGLFLDCEAKTVSFVDVNQSSLIYTIPNCSFSPPLRPIFCCIHF.

An RING-type zinc finger spans residues 15–56; sequence CPLCMNYFIDPVTIDCGHSFCRPCFYLNWQDIPFLVQCSECT. A B box-type zinc finger spans residues 88–129; it reads SEEQMCGTHRETKKIFCEVDRSLLCLLCSSSQEHRYHRHRPI. 4 residues coordinate Zn(2+): Cys-93, His-96, Cys-115, and His-121. In terms of domain architecture, B30.2/SPRY spans 269-452; it reads ELSAGPITGL…LRPIFCCIHF (184 aa).

The chain is Tripartite motif-containing protein 49C (TRIM49C) from Homo sapiens (Human).